Here is a 279-residue protein sequence, read N- to C-terminus: Urease accessory protein UreD (279 aa).

This sequence belongs to the UreD family. UreD, UreF and UreG form a complex that acts as a GTP-hydrolysis-dependent molecular chaperone, activating the urease apoprotein by helping to assemble the nickel containing metallocenter of UreC. The UreE protein probably delivers the nickel.

It localises to the cytoplasm. Required for maturation of urease via the functional incorporation of the urease nickel metallocenter. The polypeptide is Urease accessory protein UreD (Streptococcus salivarius (strain 57.I)).